A 342-amino-acid polypeptide reads, in one-letter code: MAPRVGLGLGQLEAVTILLLLGLLQSGIRADGTEASCGAVIQPRITGGGSAKPGQWPWQVSITYDGNHVCGGSLVSNKWVVSAAHCFPREHSREAYEVKLGAHQLDSYSNDTVVHTVAQIITHSSYREEGSQGDIAFIRLSSPVTFSRYIRPICLPAANASFPNGLHCTVTGWGHVAPSVSLQTPRPLQQLEVPLISRETCSCLYNINAVPEEPHTIQQDMLCAGYVKGGKDACQGDSGGPLSCPMEGIWYLAGIVSWGDACGAPNRPGVYTLTSTYASWIHHHVAELQPRVVPQTQESQPDGHLCNHHPVFSSAAAPKLLRPVLFLPLGLTLGLLSLWLEH.

An N-terminal signal peptide occupies residues 1-29 (MAPRVGLGLGQLEAVTILLLLGLLQSGIR). Residues 30–32 (ADG) constitute a propeptide, activation peptide. Intrachain disulfides connect Cys37-Cys154 and Cys70-Cys86. One can recognise a Peptidase S1 domain in the interval 45–286 (ITGGGSAKPG…YASWIHHHVA (242 aa)). The Charge relay system role is filled by His85. N-linked (GlcNAc...) asparagine glycosylation occurs at Asn110. Asp134 (charge relay system) is an active-site residue. N-linked (GlcNAc...) asparagine glycosylation is present at Asn159. Disulfide bonds link Cys168–Cys244, Cys201–Cys223, and Cys234–Cys262. Residue Ser238 is the Charge relay system of the active site. The helical transmembrane segment at 320–340 (LLRPVLFLPLGLTLGLLSLWL) threads the bilayer. The propeptide occupies 323–342 (PVLFLPLGLTLGLLSLWLEH).

It belongs to the peptidase S1 family. As to quaternary structure, heterodimer of two chains, light and heavy, held by a disulfide bond.

Its subcellular location is the cell membrane. It is found in the secreted. It localises to the extracellular space. In terms of biological role, possesses a trypsin-like cleavage specificity with a preference for poly-basic substrates. Stimulates epithelial sodium channel (ENaC) activity through activating cleavage of the gamma subunits (SCNN1G). The chain is Prostasin (Prss8) from Mus musculus (Mouse).